A 403-amino-acid polypeptide reads, in one-letter code: Arginine biosynthesis bifunctional protein ArgJ (403 aa).

The segment covering 1-11 has biased composition (polar residues); sequence MVQSVLSSTSH. A disordered region spans residues 1-21; the sequence is MVQSVLSSTSHGSERADMSAA. Residues Thr161, Lys183, Thr194, Glu273, Asn398, and Thr403 each contribute to the substrate site. Thr194 serves as the catalytic Nucleophile.

The protein belongs to the ArgJ family. Heterotetramer of two alpha and two beta chains.

Its subcellular location is the cytoplasm. It catalyses the reaction N(2)-acetyl-L-ornithine + L-glutamate = N-acetyl-L-glutamate + L-ornithine. The enzyme catalyses L-glutamate + acetyl-CoA = N-acetyl-L-glutamate + CoA + H(+). The protein operates within amino-acid biosynthesis; L-arginine biosynthesis; L-ornithine and N-acetyl-L-glutamate from L-glutamate and N(2)-acetyl-L-ornithine (cyclic): step 1/1. It participates in amino-acid biosynthesis; L-arginine biosynthesis; N(2)-acetyl-L-ornithine from L-glutamate: step 1/4. Functionally, catalyzes two activities which are involved in the cyclic version of arginine biosynthesis: the synthesis of N-acetylglutamate from glutamate and acetyl-CoA as the acetyl donor, and of ornithine by transacetylation between N(2)-acetylornithine and glutamate. The polypeptide is Arginine biosynthesis bifunctional protein ArgJ (Rhodococcoides fascians (Rhodococcus fascians)).